Reading from the N-terminus, the 313-residue chain is Synaptophysin (313 aa).

Over 1–25 (MLLLADMDVVNQLVAGGQFRVVKEP) the chain is Cytoplasmic. One can recognise an MARVEL domain in the interval 21–227 (VVKEPLGFVK…NLWFVFKETG (207 aa)). The helical transmembrane segment at 26 to 49 (LGFVKVLQWVFAIFAFATCGSYSG) threads the bilayer. Over 50 to 106 (ELQLSVDCANKTKSDLNIEVEFEYPFRLHEVYFEAPTCQGDPKKIFLVGNYSSSAEF) the chain is Vesicular. Asn59 carries an N-linked (GlcNAc...) asparagine glycan. A Phosphotyrosine modification is found at Tyr81. N-linked (GlcNAc...) asparagine glycosylation occurs at Asn99. A helical membrane pass occupies residues 107 to 130 (FVTVAVFAFLYSMGALATYIFLQN). Over 131-137 (KYRENNK) the chain is Cytoplasmic. A helical transmembrane segment spans residues 138 to 161 (GPMLDFLATAVFAFMWLVSSSAWA). Residues 162–199 (KGLSDVKMATDPENIIKGMHVCHQPGNTCKELRDPVTS) lie on the Vesicular side of the membrane. Residues 200–223 (GLNTSVVFGFLNLVLWVGNLWFVF) form a helical membrane-spanning segment. The Cytoplasmic portion of the chain corresponds to 224-313 (KETGWAAPFL…GAPTSFSNQM (90 aa)). The segment at 238–313 (GAPEKQPAPG…GAPTSFSNQM (76 aa)) is disordered. A compositionally biased stretch (gly residues) spans 253–263 (AGYGQGPGGYG). Residues 254–304 (GYGQGPGGYGPQDSYGPQGGYQPDYGQPASSGGGGYGPQGDYGQQGYGPQG) form a repeats, Gly/Tyr-rich region. A compositionally biased stretch (low complexity) spans 264–283 (PQDSYGPQGGYQPDYGQPAS). Gly residues predominate over residues 284–302 (SGGGGYGPQGDYGQQGYGP).

This sequence belongs to the synaptophysin/synaptobrevin family. As to quaternary structure, homohexamer or homotetramer. Interacts with SRCIN1. Interacts with VAMP2; the interaction is inhibited by interaction of VAPM2 with SEPT8. Post-translationally, ubiquitinated; mediated by SIAH1 or SIAH2 and leading to its subsequent proteasomal degradation. In terms of processing, phosphorylated by SRC. Characteristic of a type of small (30-80 nm) neurosecretory vesicles, including presynaptic vesicles, but also vesicles of various neuroendocrine cells of both neuronal and epithelial phenotype.

Its subcellular location is the cytoplasmic vesicle. The protein resides in the secretory vesicle. It is found in the synaptic vesicle membrane. It localises to the synapse. The protein localises to the synaptosome. Its function is as follows. Possibly involved in structural functions as organizing other membrane components or in targeting the vesicles to the plasma membrane. Involved in the regulation of short-term and long-term synaptic plasticity. In Bos taurus (Bovine), this protein is Synaptophysin (SYP).